Here is a 204-residue protein sequence, read N- to C-terminus: Protein GET1 (204 aa).

The Lumenal segment spans residues 1–4 (MPSL). The helical transmembrane segment at 5–24 (LLIIFVTELVVQLVNTLGAT) threads the bilayer. Topologically, residues 25–110 (TINDLLWRIY…KFDRTLTTTR (86 aa)) are cytoplasmic. Residues 72–107 (AKWAKLRRQHDKLLEDLEKKKASLEAARTKFDRTLT) are a coiled coil. A helical transmembrane segment spans residues 111–131 (TVSTRSVQWFLPFWYSKEPMF). Topologically, residues 132–155 (WLPYGWFPYYVEWFASFPRAPMGS) are lumenal. Residues 156 to 172 (VSIVVWQWACTAVIALM) form a helical membrane-spanning segment. Residues 173-204 (IEAATAALVYVAAKQSQKIRQPVPAQSEKKDS) are Cytoplasmic-facing.

This sequence belongs to the WRB/GET1 family. As to quaternary structure, interacts with GET3.

It localises to the endoplasmic reticulum membrane. Required for the post-translational delivery of tail-anchored (TA) proteins to the endoplasmic reticulum. Acts as a membrane receptor for soluble GET3, which recognizes and selectively binds the transmembrane domain of TA proteins in the cytosol. This is Protein GET1 from Podospora anserina (strain S / ATCC MYA-4624 / DSM 980 / FGSC 10383) (Pleurage anserina).